A 326-amino-acid chain; its full sequence is MDETKIPKKLQSDDEENISLISSLPFDVDFDSTKLFKYQGCWYDDKTLQGVLNFQRGFEPQDTDIIIASFPKSGTTWLKALTVALLERSKQKHSSDDHPLLLDNPHGLVPFLELRLFTETSKPDLTSISSSPRLFSTHVAFQTLREALKNSPCKIVYVWRNVKDVLVSFWYFNSAKLKIEEERSILDSMFESFCRGVINYGPSWEHVLNYWRASLEDSKNVLFLKYEELKTEPRVQLKRLAEFLDCPFTVEEEERGSVEEILDLCSLRNLKNLEINKTGKTLRGADHKIFFRKGEVGDSKNHLTPEMEKIIDMITEEKFEGSDLKF.

Residue 72-77 participates in 3'-phosphoadenylyl sulfate binding; sequence KSGTTW. Residue histidine 138 is the Proton acceptor of the active site. 3'-phosphoadenylyl sulfate contacts are provided by residues arginine 160, serine 168, tyrosine 226, and 292 to 294; that span reads RKG.

This sequence belongs to the sulfotransferase 1 family.

It is found in the cytoplasm. Sulfotransferase that utilizes 3'-phospho-5'-adenylyl sulfate (PAPS) as sulfonate donor. The protein is Cytosolic sulfotransferase 7 (SOT7) of Arabidopsis thaliana (Mouse-ear cress).